Consider the following 130-residue polypeptide: Small ribosomal subunit protein uS8 (130 aa).

Belongs to the universal ribosomal protein uS8 family. As to quaternary structure, part of the 30S ribosomal subunit. Contacts proteins S5 and S12.

Its function is as follows. One of the primary rRNA binding proteins, it binds directly to 16S rRNA central domain where it helps coordinate assembly of the platform of the 30S subunit. The chain is Small ribosomal subunit protein uS8 from Chromohalobacter salexigens (strain ATCC BAA-138 / DSM 3043 / CIP 106854 / NCIMB 13768 / 1H11).